The primary structure comprises 147 residues: Protein PBDC1 homolog (147 aa).

This sequence belongs to the PBDC1 family.

It is found in the cytoplasm. Its subcellular location is the nucleus. The polypeptide is Protein PBDC1 homolog (Schizosaccharomyces pombe (strain 972 / ATCC 24843) (Fission yeast)).